The following is a 500-amino-acid chain: Lysine--tRNA ligase (500 aa).

2 residues coordinate Mg(2+): Glu-410 and Glu-417.

This sequence belongs to the class-II aminoacyl-tRNA synthetase family. Homodimer. Mg(2+) serves as cofactor.

The protein resides in the cytoplasm. It catalyses the reaction tRNA(Lys) + L-lysine + ATP = L-lysyl-tRNA(Lys) + AMP + diphosphate. The polypeptide is Lysine--tRNA ligase (Pseudomonas putida (strain ATCC 47054 / DSM 6125 / CFBP 8728 / NCIMB 11950 / KT2440)).